A 479-amino-acid polypeptide reads, in one-letter code: Ribosomal RNA small subunit methyltransferase F (479 aa).

Residues 125–131 (AAAPGSK), glutamate 149, aspartate 176, and aspartate 194 contribute to the S-adenosyl-L-methionine site. The active-site Nucleophile is the cysteine 247.

Belongs to the class I-like SAM-binding methyltransferase superfamily. RsmB/NOP family.

The protein localises to the cytoplasm. The enzyme catalyses cytidine(1407) in 16S rRNA + S-adenosyl-L-methionine = 5-methylcytidine(1407) in 16S rRNA + S-adenosyl-L-homocysteine + H(+). Specifically methylates the cytosine at position 1407 (m5C1407) of 16S rRNA. This Escherichia coli (strain SE11) protein is Ribosomal RNA small subunit methyltransferase F.